The primary structure comprises 167 residues: ATP synthase subunit b (167 aa).

The chain crosses the membrane as a helical span at residues 10 to 30; the sequence is TFFFQLANTLIMFLILKHFLF.

This sequence belongs to the ATPase B chain family. F-type ATPases have 2 components, F(1) - the catalytic core - and F(0) - the membrane proton channel. F(1) has five subunits: alpha(3), beta(3), gamma(1), delta(1), epsilon(1). F(0) has three main subunits: a(1), b(2) and c(10-14). The alpha and beta chains form an alternating ring which encloses part of the gamma chain. F(1) is attached to F(0) by a central stalk formed by the gamma and epsilon chains, while a peripheral stalk is formed by the delta and b chains.

Its subcellular location is the cell membrane. Its function is as follows. F(1)F(0) ATP synthase produces ATP from ADP in the presence of a proton or sodium gradient. F-type ATPases consist of two structural domains, F(1) containing the extramembraneous catalytic core and F(0) containing the membrane proton channel, linked together by a central stalk and a peripheral stalk. During catalysis, ATP synthesis in the catalytic domain of F(1) is coupled via a rotary mechanism of the central stalk subunits to proton translocation. Component of the F(0) channel, it forms part of the peripheral stalk, linking F(1) to F(0). The chain is ATP synthase subunit b from Alkaliphilus oremlandii (strain OhILAs) (Clostridium oremlandii (strain OhILAs)).